The primary structure comprises 331 residues: GTP 3',8-cyclase (331 aa).

The 225-residue stretch at 9 to 233 (PFGRRITYLR…VRSSKVTGGP (225 aa)) folds into the Radical SAM core domain. R18 is a binding site for GTP. [4Fe-4S] cluster-binding residues include C25 and C29. Y31 serves as a coordination point for S-adenosyl-L-methionine. A [4Fe-4S] cluster-binding site is contributed by C32. Residue R67 coordinates GTP. Residue G71 participates in S-adenosyl-L-methionine binding. Residue T98 participates in GTP binding. S122 lines the S-adenosyl-L-methionine pocket. K159 lines the GTP pocket. Position 193 (M193) interacts with S-adenosyl-L-methionine. C257 and C260 together coordinate [4Fe-4S] cluster. 262–264 (RVR) contacts GTP. C274 serves as a coordination point for [4Fe-4S] cluster.

This sequence belongs to the radical SAM superfamily. MoaA family. As to quaternary structure, monomer and homodimer. Requires [4Fe-4S] cluster as cofactor.

It catalyses the reaction GTP + AH2 + S-adenosyl-L-methionine = (8S)-3',8-cyclo-7,8-dihydroguanosine 5'-triphosphate + 5'-deoxyadenosine + L-methionine + A + H(+). The protein operates within cofactor biosynthesis; molybdopterin biosynthesis. Catalyzes the cyclization of GTP to (8S)-3',8-cyclo-7,8-dihydroguanosine 5'-triphosphate. The sequence is that of GTP 3',8-cyclase from Ectopseudomonas mendocina (strain ymp) (Pseudomonas mendocina).